The chain runs to 62 residues: Alpha-conotoxin Vt1.27 (62 aa).

A signal peptide spans 1–21 (MGMRMMFTVFLLVVLATTVVS). A propeptide spanning residues 22–40 (FTLDRASDGASAAADLVAR) is cleaved from the precursor. Intrachain disulfides connect C46–C52 and C47–C61.

Belongs to the conotoxin A superfamily. In terms of tissue distribution, expressed by the venom duct.

Its subcellular location is the secreted. Its function is as follows. The short (45-61) amidated synthetic peptide inhibits the rat neuronal alpha-3-beta-2/CHRNA3-CHRNB2 nicotinic acetylcholine receptor (nAChR) (IC(50)=1.16 uM). It also inhibits Cav2.2/CACNA1C voltage-gated calcium channel (IC(50)=398 nM). In vivo, when tested in rat pain models, this short amidated peptide increases the pain threshold. This chain is Alpha-conotoxin Vt1.27, found in Conus planorbis (Planorbis cone).